A 379-amino-acid polypeptide reads, in one-letter code: Queuine tRNA-ribosyltransferase (379 aa).

The Proton acceptor role is filled by D94. Substrate is bound by residues 94 to 98 (DSGGF), D148, Q191, and G218. The tract at residues 249 to 255 (GVGSPDS) is RNA binding. D268 (nucleophile) is an active-site residue. Positions 273–277 (TRIGR) are RNA binding; important for wobble base 34 recognition. Zn(2+)-binding residues include C306, C308, C311, and H337.

This sequence belongs to the queuine tRNA-ribosyltransferase family. As to quaternary structure, homodimer. Within each dimer, one monomer is responsible for RNA recognition and catalysis, while the other monomer binds to the replacement base PreQ1. Zn(2+) serves as cofactor.

It catalyses the reaction 7-aminomethyl-7-carbaguanine + guanosine(34) in tRNA = 7-aminomethyl-7-carbaguanosine(34) in tRNA + guanine. Its pathway is tRNA modification; tRNA-queuosine biosynthesis. Catalyzes the base-exchange of a guanine (G) residue with the queuine precursor 7-aminomethyl-7-deazaguanine (PreQ1) at position 34 (anticodon wobble position) in tRNAs with GU(N) anticodons (tRNA-Asp, -Asn, -His and -Tyr). Catalysis occurs through a double-displacement mechanism. The nucleophile active site attacks the C1' of nucleotide 34 to detach the guanine base from the RNA, forming a covalent enzyme-RNA intermediate. The proton acceptor active site deprotonates the incoming PreQ1, allowing a nucleophilic attack on the C1' of the ribose to form the product. After dissociation, two additional enzymatic reactions on the tRNA convert PreQ1 to queuine (Q), resulting in the hypermodified nucleoside queuosine (7-(((4,5-cis-dihydroxy-2-cyclopenten-1-yl)amino)methyl)-7-deazaguanosine). The protein is Queuine tRNA-ribosyltransferase of Anoxybacillus flavithermus (strain DSM 21510 / WK1).